Here is a 31-residue protein sequence, read N- to C-terminus: Diuretic hormone class 2 (31 aa).

Proline amide is present on Pro31.

It belongs to the diuretic hormone class 2 family.

The protein resides in the secreted. Regulation of fluid secretion. Stimulates primary urine secretion by Malpighian tubules and causes a dose-dependent stimulation of cAMP levels in the tubules. Has a nonselective effect on Na(+)/K(+) ion transport. In vitro, primarily elevates intracellular Ca(2+). The polypeptide is Diuretic hormone class 2 (Apis mellifera (Honeybee)).